A 315-amino-acid chain; its full sequence is Ester hydrolase C11orf54 homolog (315 aa).

3 residues coordinate Zn(2+): histidine 266, histidine 268, and histidine 278.

As to quaternary structure, monomer. Zn(2+) serves as cofactor.

The protein localises to the nucleus. It is found in the cytoplasm. Exhibits ester hydrolase activity on the substrate p-nitrophenyl acetate, in vitro. Regulates DNA damage and repair by regulating HIF1A degradation via chaperone-mediated autophagy (CMA). The protein is Ester hydrolase C11orf54 homolog of Rattus norvegicus (Rat).